The chain runs to 513 residues: ATP synthase subunit alpha 1 (513 aa).

169-176 provides a ligand contact to ATP; sequence GDRQCGKT.

Belongs to the ATPase alpha/beta chains family. As to quaternary structure, F-type ATPases have 2 components, CF(1) - the catalytic core - and CF(0) - the membrane proton channel. CF(1) has five subunits: alpha(3), beta(3), gamma(1), delta(1), epsilon(1). CF(0) has three main subunits: a(1), b(2) and c(9-12). The alpha and beta chains form an alternating ring which encloses part of the gamma chain. CF(1) is attached to CF(0) by a central stalk formed by the gamma and epsilon chains, while a peripheral stalk is formed by the delta and b chains.

The protein resides in the cell inner membrane. It carries out the reaction ATP + H2O + 4 H(+)(in) = ADP + phosphate + 5 H(+)(out). Produces ATP from ADP in the presence of a proton gradient across the membrane. The alpha chain is a regulatory subunit. This chain is ATP synthase subunit alpha 1, found in Burkholderia thailandensis (strain ATCC 700388 / DSM 13276 / CCUG 48851 / CIP 106301 / E264).